The following is a 160-amino-acid chain: Nucleotide-binding protein VV1636 (160 aa).

This sequence belongs to the YajQ family.

Its function is as follows. Nucleotide-binding protein. The polypeptide is Nucleotide-binding protein VV1636 (Vibrio vulnificus (strain YJ016)).